Consider the following 331-residue polypeptide: Pyruvate synthase subunit PorB (331 aa).

Residues C21, C24, C59, and C222 each contribute to the [4Fe-4S] cluster site.

As to quaternary structure, heterotetramer of one alpha, one beta, one delta and one gamma chain. The cofactor is [4Fe-4S] cluster.

The enzyme catalyses 2 oxidized [2Fe-2S]-[ferredoxin] + pyruvate + CoA = 2 reduced [2Fe-2S]-[ferredoxin] + acetyl-CoA + CO2 + H(+). The protein is Pyruvate synthase subunit PorB (porB) of Pyrococcus furiosus (strain ATCC 43587 / DSM 3638 / JCM 8422 / Vc1).